The primary structure comprises 74 residues: Large ribosomal subunit protein eL38B (74 aa).

The protein belongs to the eukaryotic ribosomal protein eL38 family. In terms of assembly, component of the large ribosomal subunit (LSU). Mature yeast ribosomes consist of a small (40S) and a large (60S) subunit. The 40S small subunit contains 1 molecule of ribosomal RNA (18S rRNA) and at least 33 different proteins. The large 60S subunit contains 3 rRNA molecules (25S, 5.8S and 5S rRNA) and at least 46 different proteins.

The protein resides in the cytoplasm. Component of the ribosome, a large ribonucleoprotein complex responsible for the synthesis of proteins in the cell. The small ribosomal subunit (SSU) binds messenger RNAs (mRNAs) and translates the encoded message by selecting cognate aminoacyl-transfer RNA (tRNA) molecules. The large subunit (LSU) contains the ribosomal catalytic site termed the peptidyl transferase center (PTC), which catalyzes the formation of peptide bonds, thereby polymerizing the amino acids delivered by tRNAs into a polypeptide chain. The nascent polypeptides leave the ribosome through a tunnel in the LSU and interact with protein factors that function in enzymatic processing, targeting, and the membrane insertion of nascent chains at the exit of the ribosomal tunnel. The polypeptide is Large ribosomal subunit protein eL38B (rpl3802) (Schizosaccharomyces pombe (strain 972 / ATCC 24843) (Fission yeast)).